The primary structure comprises 433 residues: MASILHYFLALSLSFSFLFFLSDSVPIPQHHTNPTKPINLLVLPVQNDASTGLHWANLQKRTPLMQVPVLVDLNGNHLWVNCEQHYSSKTYQAPFCHSTQCSRANTHQCLSCPAASRPGCHKNTCGLMSTNPITQQTGLGELGQDVLAIHATQGSTQQLGPLVTVPQFLFSCAPSFLLQKGLPRNIQGVAGLGHAPISLPNQLASHFGLQHQFTTCLSRYPTSKGALIFGDAPNNMQQFHNQDIFHDLAFTPLTVTPQGEYNVRVSSIRINQHSVFPPNKISSTIVGSSGGTMISTSTPHMVLQQSLYQAFTQVFAQQLEKQAQVKSVAPFGLCFNSNKINAYPSVDLVMDKPNGPVWRISGEDLMVQAQPGVTCLGVMNGGMQPRAEVTLGTRQLEEKLMVFDLARSRVGFSTSSLHSHGVKCGDLFNFANA.

Residues 1–24 form the signal peptide; it reads MASILHYFLALSLSFSFLFFLSDS. Residues 54-413 enclose the Peptidase A1 domain; it reads HWANLQKRTP…DLARSRVGFS (360 aa).

It belongs to the peptidase A1 family. As to quaternary structure, the mature protein consists of high- and low-kDa subunits linked by disulfide bonds.

Seed storage protein. Has a protein kinase activity. Binds leginsulin. This Glycine max (Soybean) protein is Basic 7S globulin 2.